We begin with the raw amino-acid sequence, 268 residues long: Undecaprenyl-diphosphatase (268 aa).

The next 7 membrane-spanning stretches (helical) occupy residues 7–27 (IFNA…PISS), 87–107 (LIYH…LCIY), 116–136 (FYSI…TEIS), 146–166 (IETP…WPGF), 187–207 (VEFS…LDVI), 210–230 (FYDI…SAFI), and 247–267 (SLIP…LFFM).

The protein belongs to the UppP family.

It localises to the cell membrane. It catalyses the reaction di-trans,octa-cis-undecaprenyl diphosphate + H2O = di-trans,octa-cis-undecaprenyl phosphate + phosphate + H(+). In terms of biological role, catalyzes the dephosphorylation of undecaprenyl diphosphate (UPP). Confers resistance to bacitracin. The sequence is that of Undecaprenyl-diphosphatase from Buchnera aphidicola subsp. Baizongia pistaciae (strain Bp).